The following is a 117-amino-acid chain: Mini-circle uncharacterized 12.9 kDa protein (117 aa).

In Streptomyces coelicolor (strain ATCC BAA-471 / A3(2) / M145), this protein is Mini-circle uncharacterized 12.9 kDa protein.